A 178-amino-acid chain; its full sequence is MSRIGKKPVAIPSGVTINVAAGNQVEVKSTKATLNKTFSSDVTFNIEDGVVTVTPKNNSKNAIAQSGTARAILNNMVEGVSKGFERKLKIIGVGYRAKAQGSELNLTLGFSHPVVYKLPQGITAETPAPTEIILKGADKEVLGKVASEIREYRKPEPYKGKGVRYEDEYVAKKEAKKK.

Belongs to the universal ribosomal protein uL6 family. Part of the 50S ribosomal subunit.

This protein binds to the 23S rRNA, and is important in its secondary structure. It is located near the subunit interface in the base of the L7/L12 stalk, and near the tRNA binding site of the peptidyltransferase center. The sequence is that of Large ribosomal subunit protein uL6 from Francisella philomiragia subsp. philomiragia (strain ATCC 25017 / CCUG 19701 / FSC 153 / O#319-036).